Reading from the N-terminus, the 830-residue chain is Lon protease (830 aa).

Residues 20 to 215 (LPAVAIRDVV…LLIKILANEV (196 aa)) enclose the Lon N-terminal domain. 367-374 (GPPGVGKT) is a binding site for ATP. Residues 602-781 (ENGVGISTGL…DEIVKIAFEK (180 aa)) enclose the Lon proteolytic domain. Catalysis depends on residues Ser-687 and Lys-730. The tract at residues 784–830 (PKSSFKKSKTAPKKESAKKAAKSKKPAVKKPAVKKTKQVKKTAKKKK) is disordered. Basic residues predominate over residues 802-830 (KAAKSKKPAVKKPAVKKTKQVKKTAKKKK).

This sequence belongs to the peptidase S16 family. Homohexamer. Organized in a ring with a central cavity.

Its subcellular location is the cytoplasm. It carries out the reaction Hydrolysis of proteins in presence of ATP.. Functionally, ATP-dependent serine protease that mediates the selective degradation of mutant and abnormal proteins as well as certain short-lived regulatory proteins. Required for cellular homeostasis and for survival from DNA damage and developmental changes induced by stress. Degrades polypeptides processively to yield small peptide fragments that are 5 to 10 amino acids long. Binds to DNA in a double-stranded, site-specific manner. The chain is Lon protease from Elusimicrobium minutum (strain Pei191).